The following is a 765-amino-acid chain: MFNITNIQSTARHQSISNEASTEVPLKEEIWNKISAFFSSEHQVEAQNCIAYLCHPPETASPEEIKSKFECLRMLAFPAYADNIQYSRGGADQYCILSENSQEILSIVFNTEGYTVEGGGKSVTYTRVTESEQASSASGSKDAVNYELIWSEWVKEAPAKEAANREEAVQRMRDCLKNNKTELRLKILGLTTIPAYIPEQITTLILDNNELKSLPENLQGNIKTLYANSNQLTSIPATLPDTIQEMELSINRITELPERLPSALQSLDLFHNKISCLPENLPEELRYLSVYDNSIRTLPAHLPSGITHLNVQSNSLTALPETLPPGLKTLEAGENALTSLPASLPPELQVLDVSKNQITVLPETLPPTITTLDVSRNALTNLPENLPAALQIMQASRNNLVRLPESLPHFRGEGPQPTRIIVEYNPFSERTIQNMQRLMSSVDYQGPRVLFAMGDFSIVRVTRPLHQAVQGWLTSLEEEDVNQWRAFEAEANAAAFSGFLDYLGDTQNTRHPDFKEQVSAWLMRLAEDSALRETVFIIAMNATISCEDRVTLAYHQMQEATLVHDAERGAFDSHLAELIMAGREIFRLEQIESLAREKVKRLFFIDEVEVFLGFQNQLRESLSLTTMTRDMRFYNVSGITESDLDEAEIRIKMAENRDFHKWFALWGPWHKVLERIAPEEWREMMAKRDECIETDEYQSRVNAELEDLRIADDSDAERTTEVQMDAERAIGIKIMEEINQTLFTEIMENILLKKEVSSLMSAYWR.

Residues 1 to 451 form an interaction with target proteins region; that stretch reads MFNITNIQST…VDYQGPRVLF (451 aa). LRR repeat units follow at residues 200–219, 221–242, 243–262, 263–284, 285–305, 306–325, 326–346, 347–368, 369–389, and 390–410; these read QITTLILDNNELKSLPENLQ, NIKTLYANSNQLTSIPATLPDT, IQEMELSINRITELPERLPS, ALQSLDLFHNKISCLPENLPEE, LRYLSVYDNSIRTLPAHLPSG, ITHLNVQSNSLTALPETLPP, GLKTLEAGENALTSLPASLPP, ELQVLDVSKNQITVLPETLPPT, ITTLDVSRNALTNLPENLPAA, and LQIMQASRNNLVRLPESLPHF. The tract at residues 452 to 461 is linker; sequence AMGDFSIVRV. Residues 462–765 form an E3 ubiquitin-protein ligase catalytic domain region; the sequence is TRPLHQAVQG…VSSLMSAYWR (304 aa). The NEL domain maps to 464–758; it reads PLHQAVQGWL…NILLKKEVSS (295 aa). Cysteine 546 functions as the Glycyl thioester intermediate in the catalytic mechanism.

It belongs to the LRR-containing bacterial E3 ligase family. Interacts with host TXN. In terms of processing, ubiquitinated in the presence of host E1 ubiquitin-activating enzyme, E2 ubiquitin-conjugating enzyme and ubiquitin.

It is found in the secreted. The protein localises to the host cytoplasm. It carries out the reaction S-ubiquitinyl-[E2 ubiquitin-conjugating enzyme]-L-cysteine + [acceptor protein]-L-lysine = [E2 ubiquitin-conjugating enzyme]-L-cysteine + N(6)-ubiquitinyl-[acceptor protein]-L-lysine.. With respect to regulation, binding to TXN is inhibited by hydrogen peroxide in vitro. Its function is as follows. Effector proteins function to alter host cell physiology and promote bacterial survival in host tissues. This protein is an E3 ubiquitin ligase that interferes with host's ubiquitination pathway. Can ubiquitinate both ubiquitin and host TXN (thioredoxin). Leads to significant decrease of thioredoxin activity and increase of host cell death. This chain is E3 ubiquitin-protein ligase SlrP (slrP), found in Salmonella typhimurium (strain LT2 / SGSC1412 / ATCC 700720).